The chain runs to 1461 residues: Regulation of nuclear pre-mRNA domain-containing protein 2 (1461 aa).

Ala2 carries the N-acetylalanine modification. Phosphoserine is present on Ser16. In terms of domain architecture, CID spans Ser19–Phe149. Disordered stretches follow at residues Ser311 to Ser438 and Asn469 to His504. Residues Glu352 to Val368 are compositionally biased toward basic and acidic residues. Ser356 is modified (phosphoserine). Thr358 carries the phosphothreonine modification. Over residues Glu369–Asp378 the composition is skewed to acidic residues. Ser374 carries the phosphoserine modification. Residues Asp379–Glu394 show a composition bias toward basic and acidic residues. Polar residues predominate over residues Ala397–Cys416. Low complexity-rich tracts occupy residues Thr417–Thr426 and Ser473–Ser491. Ser473, Ser476, and Ser479 each carry phosphoserine. Thr482 carries the post-translational modification Phosphothreonine. Position 485 is a phosphoserine (Ser485). At Thr517 the chain carries Phosphothreonine. The disordered stretch occupies residues Thr547–Lys623. Positions Ala553–Ala566 are enriched in low complexity. Ser564 carries the phosphoserine modification. The segment covering Asn567–Gln583 has biased composition (polar residues). At Ser593 the chain carries Phosphoserine. Low complexity predominate over residues Ser593 to Ser614. Thr598 carries the post-translational modification Phosphothreonine. Phosphoserine occurs at positions 614, 663, 665, and 716. 5 disordered regions span residues Gly696–Leu849, Ser900–Leu997, Ala1016–Pro1102, Ser1132–Leu1312, and Phe1340–Tyr1461. Thr723 is modified (phosphothreonine). Ser730 carries the post-translational modification Phosphoserine. Thr732 bears the Phosphothreonine mark. Residues Pro742–Leu752 show a composition bias toward polar residues. Ser758 and Ser762 each carry phosphoserine. Residues Ser758–Arg768 are compositionally biased toward low complexity. Phosphothreonine is present on Thr763. Phosphoserine is present on residues Ser769, Ser817, Ser826, Ser900, Ser909, Ser928, Ser965, and Ser976. A compositionally biased stretch (polar residues) spans Arg927–His954. Over residues Ser1031 to Gln1055 the composition is skewed to polar residues. Residues Ser1068 and Ser1099 each carry the phosphoserine modification. Residues Gly1141–Ser1150 show a composition bias toward low complexity. Residues Leu1151–Thr1160 show a composition bias toward gly residues. Residues Phe1174 to Thr1189 show a composition bias toward polar residues. Pro residues-rich tracts occupy residues Phe1267 to Gly1277 and Ser1290 to Val1299. At Arg1366 the chain carries Asymmetric dimethylarginine. Gly residues predominate over residues Pro1382–Ser1391. Basic and acidic residues predominate over residues Pro1417–His1434. Asymmetric dimethylarginine occurs at positions 1424 and 1430.

In terms of assembly, associates with the RNA polymerase II complex.

The chain is Regulation of nuclear pre-mRNA domain-containing protein 2 (RPRD2) from Homo sapiens (Human).